The following is a 413-amino-acid chain: Hemocyanin type 2 unit e (413 aa).

Asn-17 carries N-linked (GlcNAc...) (high mannose) asparagine glycosylation. His-49 serves as a coordination point for Cu cation. A disulfide bond links Cys-55 and Cys-66. Positions 67–69 (CVH) form a cross-link, 2'-(S-cysteinyl)-histidine (Cys-His). Positions 69 and 78 each coordinate Cu cation. Asn-127 carries N-linked (GlcNAc...) (high mannose) asparagine glycosylation. 2 cysteine pairs are disulfide-bonded: Cys-179–Cys-246 and Cys-336–Cys-342. Residues His-189, His-193, and His-220 each coordinate Cu cation.

The protein belongs to the tyrosinase family. Hemocyanin subfamily. As to quaternary structure, decamers of large identical subunits, each containing 8 globular oxygen-binding functional units. It depends on Cu(2+) as a cofactor. Hemolymph.

It is found in the secreted. Its subcellular location is the extracellular space. Hemocyanins are copper-containing oxygen carriers occurring freely dissolved in the hemolymph of many mollusks and arthropods. The chain is Hemocyanin type 2 unit e from Rapana venosa (Veined rapa whelk).